Reading from the N-terminus, the 334-residue chain is Tetraacyldisaccharide 4'-kinase (334 aa).

Residue 60-67 coordinates ATP; sequence TVGGTGKT.

Belongs to the LpxK family.

It catalyses the reaction a lipid A disaccharide + ATP = a lipid IVA + ADP + H(+). The protein operates within glycolipid biosynthesis; lipid IV(A) biosynthesis; lipid IV(A) from (3R)-3-hydroxytetradecanoyl-[acyl-carrier-protein] and UDP-N-acetyl-alpha-D-glucosamine: step 6/6. In terms of biological role, transfers the gamma-phosphate of ATP to the 4'-position of a tetraacyldisaccharide 1-phosphate intermediate (termed DS-1-P) to form tetraacyldisaccharide 1,4'-bis-phosphate (lipid IVA). This chain is Tetraacyldisaccharide 4'-kinase, found in Stutzerimonas stutzeri (strain A1501) (Pseudomonas stutzeri).